The chain runs to 412 residues: FAD-dependent monooxygenase nscC (412 aa).

The signal sequence occupies residues 1–21; it reads MGKQQETILIIGAGIAGLTTS. Residues Glu35 and Ala46 each contribute to the FAD site. N-linked (GlcNAc...) asparagine glycosylation is present at Asn92. Position 119 (Arg119) interacts with FAD. Asn170 and Asn231 each carry an N-linked (GlcNAc...) asparagine glycan. 2 residues coordinate FAD: Asp326 and Gly339.

This sequence belongs to the paxM FAD-dependent monooxygenase family. FAD is required as a cofactor.

It participates in secondary metabolite biosynthesis. Functionally, FAD-dependent monooxygenase; part of the gene cluster that mediates the biosynthesis of neosartoricin B, a prenylated anthracenone that probably exhibits T-cell antiproliferative activity, suggestive of a physiological role as an immunosuppressive agent. The non-reducing polyketide synthase nscA probably synthesizes and cyclizes the decaketide backbone. The hydrolase nscB then mediates the product release through hydrolysis followed by spontaneous decarboxylation. The prenyltransferase nscD catalyzes the addition of the dimethylallyl group to the aromatic C5. The FAD-dependent monooxygenase nscC is then responsible for the stereospecific hydroxylation at C2. Neosartoricin B can be converted into two additional compounds neosartoricins C and D. Neosartoricin C is a spirocyclic compound that is cyclized through the attack of C3 hydroxyl on C14, followed by dehydration. On the other hand, neosartoricin D is a further cyclized compound in which attack of C2 on C14 in neosartoricin C results in the formation of the acetal-containing dioxabicyclo-octanone ring. Both of these compounds are novel and possibly represent related metabolites of the gene cluster. The polypeptide is FAD-dependent monooxygenase nscC (Arthroderma benhamiae (strain ATCC MYA-4681 / CBS 112371) (Trichophyton mentagrophytes)).